A 23-amino-acid chain; its full sequence is Endochitinase B (23 aa).

The protein belongs to the glycosyl hydrolase 19 family. Chitinase class I subfamily.

It catalyses the reaction Random endo-hydrolysis of N-acetyl-beta-D-glucosaminide (1-&gt;4)-beta-linkages in chitin and chitodextrins.. Defense against chitin-containing fungal pathogens. The sequence is that of Endochitinase B from Pisum sativum (Garden pea).